The primary structure comprises 483 residues: Glutamyl-tRNA(Gln) amidotransferase subunit A (483 aa).

Catalysis depends on charge relay system residues Lys76 and Ser151. Catalysis depends on Ser175, which acts as the Acyl-ester intermediate.

The protein belongs to the amidase family. GatA subfamily. Heterotrimer of A, B and C subunits.

It catalyses the reaction L-glutamyl-tRNA(Gln) + L-glutamine + ATP + H2O = L-glutaminyl-tRNA(Gln) + L-glutamate + ADP + phosphate + H(+). In terms of biological role, allows the formation of correctly charged Gln-tRNA(Gln) through the transamidation of misacylated Glu-tRNA(Gln) in organisms which lack glutaminyl-tRNA synthetase. The reaction takes place in the presence of glutamine and ATP through an activated gamma-phospho-Glu-tRNA(Gln). The protein is Glutamyl-tRNA(Gln) amidotransferase subunit A of Chromobacterium violaceum (strain ATCC 12472 / DSM 30191 / JCM 1249 / CCUG 213 / NBRC 12614 / NCIMB 9131 / NCTC 9757 / MK).